The primary structure comprises 3341 residues: Genome polyprotein (3341 aa).

Basic and acidic residues-rich tracts occupy residues methionine 1–glycine 14 and arginine 24–glycine 35. Residues methionine 1–lysine 57 are disordered. Topologically, residues methionine 1 to proline 120 are cytoplasmic. Over residues serine 37–glutamine 50 the composition is skewed to polar residues. Residues alanine 55 to isoleucine 97 are hydrophobic; homodimerization of capsid protein C. Residues threonine 117–cysteine 136 constitute a propeptide, ER anchor for the capsid protein C, removed in mature form by serine protease NS3. Residues methionine 121–methionine 141 form a helical membrane-spanning segment. The Extracellular portion of the chain corresponds to glutamine 142–threonine 245. N-linked (GlcNAc...) asparagine; by host glycosylation is found at asparagine 157 and asparagine 243. A helical transmembrane segment spans residues isoleucine 246–threonine 262. A topological domain (cytoplasmic) is located at residue tryptophan 263. The helical transmembrane segment at valine 264–glycine 278 threads the bilayer. The Extracellular segment spans residues glutamate 279–phenylalanine 665. An N-linked (GlcNAc...) asparagine; by host glycan is attached at asparagine 339. Positions asparagine 371 to glycine 384 are involved in fusion. Residues asparagine 399, asparagine 411, asparagine 575, and asparagine 611 are each glycosylated (N-linked (GlcNAc...) asparagine; by host). The helical transmembrane segment at serine 666–isoleucine 686 threads the bilayer. Residues aspartate 687–arginine 689 are Cytoplasmic-facing. The chain crosses the membrane as a helical span at residues isoleucine 690 to alanine 705. Topologically, residues aspartate 706–arginine 1138 are extracellular. Residues asparagine 794, asparagine 896, asparagine 993, and asparagine 1027 are each glycosylated (N-linked (GlcNAc...) asparagine; by host). Residues leucine 1139–glycine 1159 traverse the membrane as a helical segment. Residues leucine 1160–serine 1178 lie on the Cytoplasmic side of the membrane. The chain crosses the membrane as a helical span at residues methionine 1179–isoleucine 1199. At arginine 1200 to alanine 1204 the chain is on the lumenal side. The helical transmembrane segment at methionine 1205–valine 1225 threads the bilayer. Residues aspartate 1226–tyrosine 1231 are Cytoplasmic-facing. Residues leucine 1232–leucine 1252 form a helical membrane-spanning segment. At glutamine 1253–cysteine 1261 the chain is on the lumenal side. Residues phenylalanine 1262–phenylalanine 1282 form a helical membrane-spanning segment. Residues serine 1283–aspartate 1303 lie on the Cytoplasmic side of the membrane. A helical membrane pass occupies residues serine 1304–alanine 1324. The Lumenal portion of the chain corresponds to glutamate 1325–lysine 1326. A helical transmembrane segment spans residues alanine 1327–methionine 1347. Topologically, residues glutamate 1348–glutamate 1403 are cytoplasmic. The segment at residues leucine 1404–leucine 1424 is an intramembrane region (helical). At tyrosine 1425 to alanine 2089 the chain is on the cytoplasmic side. Residues serine 1452–asparagine 1630 form the Peptidase S7 domain. Residues histidine 1506, aspartate 1530, and serine 1589 each act as charge relay system; for serine protease NS3 activity in the active site. One can recognise a Helicase ATP-binding domain in the interval glutamate 1627–isoleucine 1780. Tryptophan 1640–threonine 1647 is an ATP binding site. A DECH box motif is present at residues aspartate 1729–histidine 1732. The Helicase C-terminal domain maps to asparagine 1793–serine 1947. A helical transmembrane segment spans residues phenylalanine 2090–leucine 2110. Over phenylalanine 2111 to methionine 2145 the chain is Lumenal. The chain crosses the membrane as a helical span at residues glycine 2146–leucine 2166. The Cytoplasmic portion of the chain corresponds to tyrosine 2167–serine 2178. A helical transmembrane segment spans residues aspartate 2179 to methionine 2199. At arginine 2200–methionine 2242 the chain is on the lumenal side. A helical membrane pass occupies residues leucine 2243–phenylalanine 2263. Residues glutamine 2264–alanine 2302 are Cytoplasmic-facing. The segment at residues isoleucine 2303 to methionine 2323 is an intramembrane region (helical). At alanine 2324–serine 2366 the chain is on the cytoplasmic side. Residues isoleucine 2367–glycine 2387 form a helical membrane-spanning segment. The Lumenal segment spans residues aspartate 2388–aspartate 2412. Residues valine 2413–tyrosine 2433 form a helical membrane-spanning segment. Over arginine 2434–isoleucine 3341 the chain is Cytoplasmic. The mRNA cap 0-1 NS5-type MT domain occupies alanine 2454–alanine 2706. An S-adenosyl-L-methionine-binding site is contributed by serine 2497. Lysine 2509 functions as the For 2'-O-MTase activity in the catalytic mechanism. S-adenosyl-L-methionine contacts are provided by glycine 2527, tryptophan 2528, threonine 2545, isoleucine 2546, aspartate 2572, and valine 2573. Residue aspartate 2587 is the For 2'-O-MTase activity of the active site. An S-adenosyl-L-methionine-binding site is contributed by isoleucine 2588. Residues lysine 2624 and glutamate 2660 each act as for 2'-O-MTase activity in the active site. Tyrosine 2662 serves as a coordination point for S-adenosyl-L-methionine. 4 residues coordinate Zn(2+): glutamate 2881, histidine 2885, cysteine 2890, and cysteine 2893. The RdRp catalytic domain maps to lysine 2970–alanine 3117. Histidine 3152, cysteine 3168, and cysteine 3287 together coordinate Zn(2+).

This sequence in the N-terminal section; belongs to the class I-like SAM-binding methyltransferase superfamily. mRNA cap 0-1 NS5-type methyltransferase family. Homodimer. As to quaternary structure, forms heterodimers with envelope protein E in the endoplasmic reticulum and Golgi. In terms of assembly, homodimer; in the endoplasmic reticulum and Golgi. Forms homodimers as well as homohexamers. NS1 may interact with NS4A. As to quaternary structure, forms a heterodimer with serine protease NS3. May form homooligomers. In terms of assembly, forms a heterodimer with NS2B. Interacts with NS4B. Interacts with unphosphorylated RNA-directed RNA polymerase NS5; this interaction stimulates RNA-directed RNA polymerase NS5 guanylyltransferase activity. Interacts with serine protease NS3. As to quaternary structure, interacts with host STAT2; this interaction inhibits the phosphorylation of the latter, and, when all viral proteins are present (polyprotein), targets STAT2 for degradation. In terms of processing, genome polyprotein: Specific enzymatic cleavages in vivo yield mature proteins. Cleavages in the lumen of endoplasmic reticulum are performed by host signal peptidase, whereas cleavages in the cytoplasmic side are performed by serine protease NS3. Signal cleavage at the 2K-4B site requires a prior NS3 protease-mediated cleavage at the 4A-2K site. Post-translationally, cleaved in post-Golgi vesicles by a host furin, releasing the mature small envelope protein M, and peptide pr. This cleavage is incomplete as up to 30% of viral particles still carry uncleaved prM. N-glycosylated. In terms of processing, N-glycosylated. The excreted form is glycosylated and this is required for efficient secretion of the protein from infected cells. Post-translationally, phosphorylated on serines residues. This phosphorylation may trigger NS5 nuclear localization.

The protein resides in the virion. The protein localises to the host nucleus. Its subcellular location is the secreted. It is found in the virion membrane. It localises to the host endoplasmic reticulum membrane. It carries out the reaction Selective hydrolysis of -Xaa-Xaa-|-Yaa- bonds in which each of the Xaa can be either Arg or Lys and Yaa can be either Ser or Ala.. The enzyme catalyses RNA(n) + a ribonucleoside 5'-triphosphate = RNA(n+1) + diphosphate. The catalysed reaction is a ribonucleoside 5'-triphosphate + H2O = a ribonucleoside 5'-diphosphate + phosphate + H(+). It catalyses the reaction ATP + H2O = ADP + phosphate + H(+). It carries out the reaction a 5'-end (5'-triphosphoguanosine)-ribonucleoside in mRNA + S-adenosyl-L-methionine = a 5'-end (N(7)-methyl 5'-triphosphoguanosine)-ribonucleoside in mRNA + S-adenosyl-L-homocysteine. The enzyme catalyses a 5'-end (N(7)-methyl 5'-triphosphoguanosine)-ribonucleoside in mRNA + S-adenosyl-L-methionine = a 5'-end (N(7)-methyl 5'-triphosphoguanosine)-(2'-O-methyl-ribonucleoside) in mRNA + S-adenosyl-L-homocysteine + H(+). Its function is as follows. Plays a role in virus budding by binding to the cell membrane and gathering the viral RNA into a nucleocapsid that forms the core of a mature virus particle. During virus entry, may induce genome penetration into the host cytoplasm after hemifusion induced by the surface proteins. Can migrate to the cell nucleus where it modulates host functions. Functionally, prevents premature fusion activity of envelope proteins in trans-Golgi by binding to envelope protein E at pH6.0. After virion release in extracellular space, gets dissociated from E dimers. Acts as a chaperone for envelope protein E during intracellular virion assembly by masking and inactivating envelope protein E fusion peptide. prM is the only viral peptide matured by host furin in the trans-Golgi network probably to avoid catastrophic activation of the viral fusion activity in acidic Golgi compartment prior to virion release. prM-E cleavage is inefficient, and many virions are only partially matured. These uncleaved prM would play a role in immune evasion. In terms of biological role, may play a role in virus budding. Exerts cytotoxic effects by activating a mitochondrial apoptotic pathway through M ectodomain. May display a viroporin activity. Its function is as follows. Binds to host cell surface receptor and mediates fusion between viral and cellular membranes. Envelope protein is synthesized in the endoplasmic reticulum in the form of heterodimer with protein prM. They play a role in virion budding in the ER, and the newly formed immature particle is covered with 60 spikes composed of heterodimer between precursor prM and envelope protein E. The virion is transported to the Golgi apparatus where the low pH causes dissociation of PrM-E heterodimers and formation of E homodimers. prM-E cleavage is inefficient, and many virions are only partially matured. These uncleaved prM would play a role in immune evasion. Functionally, involved in immune evasion, pathogenesis and viral replication. Once cleaved off the polyprotein, is targeted to three destinations: the viral replication cycle, the plasma membrane and the extracellular compartment. May play a role in viral genome replication. Assist membrane bending and envelopment of genomic RNA at the endoplasmic reticulum. Excreted as a hexameric lipoparticle that plays a role against host immune response. Component of the viral RNA replication complex that functions in virion assembly and antagonizes the host immune response. In terms of biological role, required cofactor for the serine protease function of NS3. May have membrane-destabilizing activity and form viroporins. Its function is as follows. Displays three enzymatic activities: serine protease, NTPase and RNA helicase. NS3 serine protease, in association with NS2B, performs its autocleavage and cleaves the polyprotein at dibasic sites in the cytoplasm: C-prM, NS2A-NS2B, NS2B-NS3, NS3-NS4A, NS4A-2K and NS4B-NS5. NS3 RNA helicase binds RNA and unwinds dsRNA in the 3' to 5' direction. Functionally, regulates the ATPase activity of the NS3 helicase activity. NS4A allows NS3 helicase to conserve energy during unwinding. Functions as a signal peptide for NS4B and is required for the interferon antagonism activity of the latter. In terms of biological role, inhibits interferon (IFN)-induced host STAT1 phosphorylation and nuclear translocation, thereby preventing the establishment of a cellular antiviral state by blocking the IFN-alpha/beta pathway. Its function is as follows. Replicates the viral (+) and (-) RNA genome, and performs the capping of genomes in the cytoplasm. NS5 methylates viral RNA cap at guanine N-7 and ribose 2'-O positions. Besides its role in RNA genome replication, also prevents the establishment of cellular antiviral state by blocking the interferon-alpha/beta (IFN-alpha/beta) signaling pathway. Inhibits host TYK2 and STAT2 phosphorylation, thereby preventing activation of JAK-STAT signaling pathway. The sequence is that of Genome polyprotein from Aedes (CFA flavivirus).